A 482-amino-acid chain; its full sequence is UDP-N-acetylmuramate--L-alanine ligase (482 aa).

An ATP-binding site is contributed by 129–135 (GTHGKTT).

Belongs to the MurCDEF family.

It is found in the cytoplasm. The catalysed reaction is UDP-N-acetyl-alpha-D-muramate + L-alanine + ATP = UDP-N-acetyl-alpha-D-muramoyl-L-alanine + ADP + phosphate + H(+). It participates in cell wall biogenesis; peptidoglycan biosynthesis. In terms of biological role, cell wall formation. This Acinetobacter baumannii (strain AB307-0294) protein is UDP-N-acetylmuramate--L-alanine ligase.